Consider the following 932-residue polypeptide: Phosphoenolpyruvate carboxylase (932 aa).

Residues histidine 164 and lysine 594 contribute to the active site.

It belongs to the PEPCase type 1 family. Mg(2+) serves as cofactor.

The catalysed reaction is oxaloacetate + phosphate = phosphoenolpyruvate + hydrogencarbonate. In terms of biological role, forms oxaloacetate, a four-carbon dicarboxylic acid source for the tricarboxylic acid cycle. The polypeptide is Phosphoenolpyruvate carboxylase (Bradyrhizobium diazoefficiens (strain JCM 10833 / BCRC 13528 / IAM 13628 / NBRC 14792 / USDA 110)).